A 476-amino-acid chain; its full sequence is Ribulose bisphosphate carboxylase large chain (476 aa).

A propeptide spanning residues 1–2 (MS) is cleaved from the precursor. Pro3 carries the N-acetylproline modification. N6,N6,N6-trimethyllysine is present on Lys14. The substrate site is built by Asn123 and Thr173. Lys175 (proton acceptor) is an active-site residue. Lys177 serves as a coordination point for substrate. Lys201, Asp203, and Glu204 together coordinate Mg(2+). At Lys201 the chain carries N6-carboxylysine. The Proton acceptor role is filled by His294. Substrate contacts are provided by Arg295, His327, and Ser379.

This sequence belongs to the RuBisCO large chain family. Type I subfamily. In terms of assembly, heterohexadecamer of 8 large chains and 8 small chains; disulfide-linked. The disulfide link is formed within the large subunit homodimers. The cofactor is Mg(2+). In terms of processing, the disulfide bond which can form in the large chain dimeric partners within the hexadecamer appears to be associated with oxidative stress and protein turnover.

It is found in the plastid. It localises to the chloroplast. The catalysed reaction is 2 (2R)-3-phosphoglycerate + 2 H(+) = D-ribulose 1,5-bisphosphate + CO2 + H2O. It catalyses the reaction D-ribulose 1,5-bisphosphate + O2 = 2-phosphoglycolate + (2R)-3-phosphoglycerate + 2 H(+). Functionally, ruBisCO catalyzes two reactions: the carboxylation of D-ribulose 1,5-bisphosphate, the primary event in carbon dioxide fixation, as well as the oxidative fragmentation of the pentose substrate in the photorespiration process. Both reactions occur simultaneously and in competition at the same active site. In Setaria italica (Foxtail millet), this protein is Ribulose bisphosphate carboxylase large chain.